Reading from the N-terminus, the 101-residue chain is Protein Tat (101 aa).

Residues 1-24 (MEPVDPNREPWNHPGSQPKTACTN) form an interaction with human CREBBP region. The tract at residues 1 to 48 (MEPVDPNREPWNHPGSQPKTACTNCYCKKCCYHCQVCFLQKGLGISYG) is transactivation. Positions 22, 25, and 27 each coordinate Zn(2+). The segment at 22 to 37 (CTNCYCKKCCYHCQVC) is cysteine-rich. K28 carries the post-translational modification N6-acetyllysine; by host PCAF. Residues C30, H33, C34, and C37 each coordinate Zn(2+). A core region spans residues 38–48 (FLQKGLGISYG). The tract at residues 48-101 (GRKKRRQRRSAPPGSKTHQDLIPKQPLSQTQRKPTGPEESKKEVESKAEPDRFD) is disordered. Residues 49 to 57 (RKKRRQRRS) carry the Nuclear localization signal, RNA-binding (TAR), and protein transduction motif. Residues 49-86 (RKKRRQRRSAPPGSKTHQDLIPKQPLSQTQRKPTGPEE) are interaction with the host capping enzyme RNGTT. K50 and K51 each carry N6-acetyllysine; by host EP300 and GCN5L2. Asymmetric dimethylarginine; by host PRMT6 occurs at positions 52 and 53. K71 is covalently cross-linked (Glycyl lysine isopeptide (Lys-Gly) (interchain with G-Cter in ubiquitin)). The span at 82–101 (TGPEESKKEVESKAEPDRFD) shows a compositional bias: basic and acidic residues.

This sequence belongs to the lentiviruses Tat family. In terms of assembly, interacts with host CCNT1. Associates with the P-TEFb complex composed at least of Tat, P-TEFb (CDK9 and CCNT1), TAR RNA, RNA Pol II. Recruits the HATs CREBBP, TAF1/TFIID, EP300, PCAF and GCN5L2. Interacts with host KAT5/Tip60; this interaction targets the latter to degradation. Interacts with the host deacetylase SIRT1. Interacts with host capping enzyme RNGTT; this interaction stimulates RNGTT. Binds to host KDR, and to the host integrins ITGAV/ITGB3 and ITGA5/ITGB1. Interacts with host KPNB1/importin beta-1 without previous binding to KPNA1/importin alpha-1. Interacts with EIF2AK2. Interacts with host nucleosome assembly protein NAP1L1; this interaction may be required for the transport of Tat within the nucleus, since the two proteins interact at the nuclear rim. Interacts with host C1QBP/SF2P32; this interaction involves lysine-acetylated Tat. Interacts with the host chemokine receptors CCR2, CCR3 and CXCR4. Interacts with host DPP4/CD26; this interaction may trigger an anti-proliferative effect. Interacts with host LDLR. Interacts with the host extracellular matrix metalloproteinase MMP1. Interacts with host PRMT6; this interaction mediates Tat's methylation. Interacts with, and is ubiquitinated by MDM2/Hdm2. Interacts with host PSMC3 and HTATIP2. Interacts with STAB1; this interaction may overcome SATB1-mediated repression of IL2 and IL2RA (interleukin) in T cells by binding to the same domain than HDAC1. Interacts (when acetylated) with human CDK13, thereby increasing HIV-1 mRNA splicing and promoting the production of the doubly spliced HIV-1 protein Nef. Interacts with host TBP; this interaction modulates the activity of transcriptional pre-initiation complex. Interacts with host RELA. Interacts with host PLSCR1; this interaction negatively regulates Tat transactivation activity by altering its subcellular distribution. Asymmetrical arginine methylation by host PRMT6 seems to diminish the transactivation capacity of Tat and affects the interaction with host CCNT1. In terms of processing, acetylation by EP300, CREBBP, GCN5L2/GCN5 and PCAF regulates the transactivation activity of Tat. EP300-mediated acetylation of Lys-50 promotes dissociation of Tat from the TAR RNA through the competitive binding to PCAF's bromodomain. In addition, the non-acetylated Tat's N-terminus can also interact with PCAF. PCAF-mediated acetylation of Lys-28 enhances Tat's binding to CCNT1. Lys-50 is deacetylated by SIRT1. Post-translationally, polyubiquitination by host MDM2 does not target Tat to degradation, but activates its transactivation function and fosters interaction with CCNT1 and TAR RNA. Phosphorylated by EIF2AK2 on serine and threonine residues adjacent to the basic region important for TAR RNA binding and function. Phosphorylation of Tat by EIF2AK2 is dependent on the prior activation of EIF2AK2 by dsRNA.

Its subcellular location is the host nucleus. It localises to the host nucleolus. The protein resides in the host cytoplasm. The protein localises to the secreted. Its function is as follows. Transcriptional activator that increases RNA Pol II processivity, thereby increasing the level of full-length viral transcripts. Recognizes a hairpin structure at the 5'-LTR of the nascent viral mRNAs referred to as the transactivation responsive RNA element (TAR) and recruits the cyclin T1-CDK9 complex (P-TEFb complex) that will in turn hyperphosphorylate the RNA polymerase II to allow efficient elongation. The CDK9 component of P-TEFb and other Tat-activated kinases hyperphosphorylate the C-terminus of RNA Pol II that becomes stabilized and much more processive. Other factors such as HTATSF1/Tat-SF1, SUPT5H/SPT5, and HTATIP2 are also important for Tat's function. Besides its effect on RNA Pol II processivity, Tat induces chromatin remodeling of proviral genes by recruiting the histone acetyltransferases (HATs) CREBBP, EP300 and PCAF to the chromatin. This also contributes to the increase in proviral transcription rate, especially when the provirus integrates in transcriptionally silent region of the host genome. To ensure maximal activation of the LTR, Tat mediates nuclear translocation of NF-kappa-B by interacting with host RELA. Through its interaction with host TBP, Tat may also modulate transcription initiation. Tat can reactivate a latently infected cell by penetrating in it and transactivating its LTR promoter. In the cytoplasm, Tat is thought to act as a translational activator of HIV-1 mRNAs. Extracellular circulating Tat can be endocytosed by surrounding uninfected cells via the binding to several surface receptors such as CD26, CXCR4, heparan sulfate proteoglycans (HSPG) or LDLR. Neurons are rarely infected, but they internalize Tat via their LDLR. Through its interaction with nuclear HATs, Tat is potentially able to control the acetylation-dependent cellular gene expression. Modulates the expression of many cellular genes involved in cell survival, proliferation or in coding for cytokines or cytokine receptors. Tat plays a role in T-cell and neurons apoptosis. Tat induced neurotoxicity and apoptosis probably contribute to neuroAIDS. Circulating Tat also acts as a chemokine-like and/or growth factor-like molecule that binds to specific receptors on the surface of the cells, affecting many cellular pathways. In the vascular system, Tat binds to ITGAV/ITGB3 and ITGA5/ITGB1 integrins dimers at the surface of endothelial cells and competes with bFGF for heparin-binding sites, leading to an excess of soluble bFGF. The polypeptide is Protein Tat (Homo sapiens (Human)).